Consider the following 286-residue polypeptide: 33 kDa chaperonin (286 aa).

Cystine bridges form between C225-C227 and C258-C261.

Belongs to the HSP33 family. Under oxidizing conditions two disulfide bonds are formed involving the reactive cysteines. Under reducing conditions zinc is bound to the reactive cysteines and the protein is inactive.

It localises to the cytoplasm. Redox regulated molecular chaperone. Protects both thermally unfolding and oxidatively damaged proteins from irreversible aggregation. Plays an important role in the bacterial defense system toward oxidative stress. The sequence is that of 33 kDa chaperonin from Shewanella sp. (strain MR-4).